A 91-amino-acid chain; its full sequence is RNA-binding protein Hfq (91 aa).

Positions 9–68 (DPFLNALRRERVPVSIYLVNGIKLQGQVESFDQFVILLKNTVSQMVYKHAISTVVPSRPF) constitute a Sm domain. Positions 66 to 91 (RPFNVGSHQGGSSNYNAQQDDSAGEQ) are disordered. The span at 71–91 (GSHQGGSSNYNAQQDDSAGEQ) shows a compositional bias: polar residues.

The protein belongs to the Hfq family. In terms of assembly, homohexamer.

Functionally, RNA chaperone that binds small regulatory RNA (sRNAs) and mRNAs to facilitate mRNA translational regulation in response to envelope stress, environmental stress and changes in metabolite concentrations. Also binds with high specificity to tRNAs. The chain is RNA-binding protein Hfq from Shewanella amazonensis (strain ATCC BAA-1098 / SB2B).